Reading from the N-terminus, the 947-residue chain is DEAD-box ATP-dependent RNA helicase 45 (947 aa).

Residues 1 to 14 are compositionally biased toward acidic residues; sequence MEEEEVVVVVDEEE. 2 disordered regions span residues 1–132 and 159–221; these read MEEE…EDEI and SMPA…EEFM. Composition is skewed to basic and acidic residues over residues 15–31 and 42–61; these read SERRRQKMIEEEKKRLD and KEWQEQKRLEEEEAKRREQE. Low complexity predominate over residues 62–82; the sequence is AAAGAGTPAAAAGADGDSNAG. Acidic residues-rich tracts occupy residues 88 to 108 and 196 to 219; these read DGEESDEEGYKEDSQNAEDDG and DDSDSDYDDDDDDEGGSKDEDDEE. Residues 285-313 carry the Q motif motif; sequence KTWVQSGLTSKLLDTIKKLGFEKPMPIQA. A Helicase ATP-binding domain is found at 316–494; that stretch reads LPIIMSGRDC…RKVLTKPVEI (179 aa). 329-336 lines the ATP pocket; the sequence is AKTGSGKT. The short motif at 442-445 is the DEAD box element; sequence DEAD. One can recognise a Helicase C-terminal domain in the interval 479-647; the sequence is QVEILARKVL…AVPQDLKGLA (169 aa). The disordered stretch occupies residues 658–710; that stretch reads TEQAHGTGYGGSGFKFNEEEDEARRSAKKAQAREYGYEEDKSDSDSDEEGGVR. Residues 697–706 are compositionally biased toward acidic residues; the sequence is DKSDSDSDEE. Positions 854–879 form a coiled coil; sequence TELSVKKAKSELKRVLEDCANHALNL.

This sequence belongs to the DEAD box helicase family. DDX46/PRP5 subfamily.

The catalysed reaction is ATP + H2O = ADP + phosphate + H(+). In Oryza sativa subsp. japonica (Rice), this protein is DEAD-box ATP-dependent RNA helicase 45.